Here is a 257-residue protein sequence, read N- to C-terminus: Protein CUSTOS (257 aa).

A compositionally biased stretch (low complexity) spans 1-11 (MSDLESSSSSS). A disordered region spans residues 1-72 (MSDLESSSSS…HEQDGNELQT (72 aa)). Positions 32–41 (QRPRGPEKPG) are enriched in basic and acidic residues. Serine 55 bears the Phosphoserine mark. Position 73 is a phosphothreonine (threonine 73). Disordered regions lie at residues 120 to 157 (FTSI…RRCR) and 170 to 257 (SAIH…VPSN). 2 stretches are compositionally biased toward basic residues: residues 180–190 (KKKKRKLKKKA) and 227–237 (TKKKKRKKKTK). The Nucleolar localization signal (NLS) signature appears at 228–236 (KKKKRKKKT).

It belongs to the CUSTOS family.

Its subcellular location is the nucleus envelope. Its function is as follows. Plays a role in the regulation of Wnt signaling pathway during early development. The polypeptide is Protein CUSTOS (Bos taurus (Bovine)).